The primary structure comprises 398 residues: Mannitol-1-phosphate 5-dehydrogenase (398 aa).

10–21 (AVHFGAGNIGRG) contacts NAD(+). The active site involves K221.

Belongs to the mannitol dehydrogenase family. As to quaternary structure, monomer.

The catalysed reaction is D-mannitol 1-phosphate + NAD(+) = beta-D-fructose 6-phosphate + NADH + H(+). Catalyzes the NAD(H)-dependent interconversion of D-fructose 6-phosphate and D-mannitol 1-phosphate in the mannitol metabolic pathway. This is Mannitol-1-phosphate 5-dehydrogenase from Chaetomium globosum (strain ATCC 6205 / CBS 148.51 / DSM 1962 / NBRC 6347 / NRRL 1970) (Soil fungus).